We begin with the raw amino-acid sequence, 1246 residues long: Probable membrane antigen 3 (1246 aa).

The protein localises to the virion tegument. The sequence is that of Probable membrane antigen 3 (3) from Saimiri sciureus (Common squirrel monkey).